We begin with the raw amino-acid sequence, 143 residues long: uncharacterized protein (143 aa).

This is an uncharacterized protein from Homo sapiens (Human).